Here is a 296-residue protein sequence, read N- to C-terminus: Probable endonuclease 4 (296 aa).

Zn(2+) is bound by residues histidine 69, histidine 109, glutamate 160, aspartate 194, histidine 197, histidine 231, aspartate 244, histidine 246, and glutamate 276.

Belongs to the AP endonuclease 2 family. Requires Zn(2+) as cofactor.

It carries out the reaction Endonucleolytic cleavage to 5'-phosphooligonucleotide end-products.. In terms of biological role, endonuclease IV plays a role in DNA repair. It cleaves phosphodiester bonds at apurinic or apyrimidinic (AP) sites, generating a 3'-hydroxyl group and a 5'-terminal sugar phosphate. The protein is Probable endonuclease 4 of Sulfurovum sp. (strain NBC37-1).